A 367-amino-acid polypeptide reads, in one-letter code: Holliday junction branch migration complex subunit RuvB (367 aa).

Residues 2–196 (TDEPLTDRPP…FGFTARLDFY (195 aa)) are large ATPase domain (RuvB-L). Residues leucine 35, arginine 36, glycine 77, lysine 80, threonine 81, threonine 82, 143–145 (EDF), arginine 186, tyrosine 196, and arginine 233 each bind ATP. Residue threonine 81 coordinates Mg(2+). Positions 197-267 (EPADLERIVH…VAQAALAVYE (71 aa)) are small ATPAse domain (RuvB-S). Residues 270–367 (EHGLDRLDRA…IDRDAGEPTA (98 aa)) are head domain (RuvB-H). DNA is bound by residues arginine 325 and arginine 330.

It belongs to the RuvB family. Homohexamer. Forms an RuvA(8)-RuvB(12)-Holliday junction (HJ) complex. HJ DNA is sandwiched between 2 RuvA tetramers; dsDNA enters through RuvA and exits via RuvB. An RuvB hexamer assembles on each DNA strand where it exits the tetramer. Each RuvB hexamer is contacted by two RuvA subunits (via domain III) on 2 adjacent RuvB subunits; this complex drives branch migration. In the full resolvosome a probable DNA-RuvA(4)-RuvB(12)-RuvC(2) complex forms which resolves the HJ.

It localises to the cytoplasm. The enzyme catalyses ATP + H2O = ADP + phosphate + H(+). The RuvA-RuvB-RuvC complex processes Holliday junction (HJ) DNA during genetic recombination and DNA repair, while the RuvA-RuvB complex plays an important role in the rescue of blocked DNA replication forks via replication fork reversal (RFR). RuvA specifically binds to HJ cruciform DNA, conferring on it an open structure. The RuvB hexamer acts as an ATP-dependent pump, pulling dsDNA into and through the RuvAB complex. RuvB forms 2 homohexamers on either side of HJ DNA bound by 1 or 2 RuvA tetramers; 4 subunits per hexamer contact DNA at a time. Coordinated motions by a converter formed by DNA-disengaged RuvB subunits stimulates ATP hydrolysis and nucleotide exchange. Immobilization of the converter enables RuvB to convert the ATP-contained energy into a lever motion, pulling 2 nucleotides of DNA out of the RuvA tetramer per ATP hydrolyzed, thus driving DNA branch migration. The RuvB motors rotate together with the DNA substrate, which together with the progressing nucleotide cycle form the mechanistic basis for DNA recombination by continuous HJ branch migration. Branch migration allows RuvC to scan DNA until it finds its consensus sequence, where it cleaves and resolves cruciform DNA. This chain is Holliday junction branch migration complex subunit RuvB, found in Acidothermus cellulolyticus (strain ATCC 43068 / DSM 8971 / 11B).